The chain runs to 638 residues: Phosphomethylpyrimidine synthase (638 aa).

Substrate-binding positions include N243, M272, Y301, H337, 357 to 359 (SRG), 398 to 401 (DGLR), and E437. H441 contributes to the Zn(2+) binding site. Y464 is a binding site for substrate. H505 is a Zn(2+) binding site. [4Fe-4S] cluster contacts are provided by C585, C588, and C593.

Belongs to the ThiC family. As to quaternary structure, homodimer. [4Fe-4S] cluster is required as a cofactor.

The enzyme catalyses 5-amino-1-(5-phospho-beta-D-ribosyl)imidazole + S-adenosyl-L-methionine = 4-amino-2-methyl-5-(phosphooxymethyl)pyrimidine + CO + 5'-deoxyadenosine + formate + L-methionine + 3 H(+). The protein operates within cofactor biosynthesis; thiamine diphosphate biosynthesis. In terms of biological role, catalyzes the synthesis of the hydroxymethylpyrimidine phosphate (HMP-P) moiety of thiamine from aminoimidazole ribotide (AIR) in a radical S-adenosyl-L-methionine (SAM)-dependent reaction. This is Phosphomethylpyrimidine synthase from Aromatoleum aromaticum (strain DSM 19018 / LMG 30748 / EbN1) (Azoarcus sp. (strain EbN1)).